We begin with the raw amino-acid sequence, 185 residues long: Putative RNA (cytidine(34)-2'-O)-methyltransferase (185 aa).

Residues Ile-80, Gly-105, and Ile-126 each coordinate S-adenosyl-L-methionine.

It belongs to the class IV-like SAM-binding methyltransferase superfamily. RNA methyltransferase TrmH family. TrmL subfamily.

It is found in the cytoplasm. It carries out the reaction cytidine(34) in tRNA + S-adenosyl-L-methionine = 2'-O-methylcytidine(34) in tRNA + S-adenosyl-L-homocysteine + H(+). The enzyme catalyses 5-carboxymethylaminomethyluridine(34) in tRNA(Leu) + S-adenosyl-L-methionine = 5-carboxymethylaminomethyl-2'-O-methyluridine(34) in tRNA(Leu) + S-adenosyl-L-homocysteine + H(+). Its function is as follows. Could methylate the ribose at the nucleotide 34 wobble position in tRNA. The sequence is that of Putative RNA (cytidine(34)-2'-O)-methyltransferase from Lactobacillus gasseri (strain ATCC 33323 / DSM 20243 / BCRC 14619 / CIP 102991 / JCM 1131 / KCTC 3163 / NCIMB 11718 / NCTC 13722 / AM63).